The following is a 428-amino-acid chain: Dihydroorotase (428 aa).

Zn(2+) contacts are provided by His-59 and His-61. Residues 61–63 (HLR) and Asn-93 contribute to the substrate site. Zn(2+) contacts are provided by Asp-151, His-178, and His-231. Position 277 (Asn-277) interacts with substrate. Residue Asp-304 participates in Zn(2+) binding. Asp-304 is a catalytic residue. Residues His-308 and 322-323 (FG) each bind substrate.

Belongs to the metallo-dependent hydrolases superfamily. DHOase family. Class I DHOase subfamily. The cofactor is Zn(2+).

The enzyme catalyses (S)-dihydroorotate + H2O = N-carbamoyl-L-aspartate + H(+). The protein operates within pyrimidine metabolism; UMP biosynthesis via de novo pathway; (S)-dihydroorotate from bicarbonate: step 3/3. Catalyzes the reversible cyclization of carbamoyl aspartate to dihydroorotate. In Bacillus cereus (strain ATCC 10987 / NRS 248), this protein is Dihydroorotase.